The sequence spans 481 residues: GTPase Der (481 aa).

2 consecutive EngA-type G domains span residues P47 to S210 and R221 to E394. GTP is bound by residues G53–S60, D100–W104, N162–D165, G227–S234, D274–I278, and N339–D342. A KH-like domain is found at T395–E477.

Belongs to the TRAFAC class TrmE-Era-EngA-EngB-Septin-like GTPase superfamily. EngA (Der) GTPase family. In terms of assembly, associates with the 50S ribosomal subunit.

Its function is as follows. GTPase that plays an essential role in the late steps of ribosome biogenesis. This Leifsonia xyli subsp. xyli (strain CTCB07) protein is GTPase Der.